The following is a 143-amino-acid chain: Large ribosomal subunit protein uL15 (143 aa).

Basic residues-rich tracts occupy residues 1–13 (MIRK…KQRG) and 23–38 (KKHR…GNAG). The interval 1–38 (MIRKSKKITKQRGSRTCGYGEAKKHRGAGHRGGRGNAG) is disordered.

It belongs to the universal ribosomal protein uL15 family. In terms of assembly, part of the 50S ribosomal subunit.

In terms of biological role, binds to the 23S rRNA. This is Large ribosomal subunit protein uL15 from Methanococcus vannielii.